The chain runs to 99 residues: Ubiquitin-related modifier 1 homolog 2 (99 aa).

Glycine 99 bears the 1-thioglycine mark. A Glycyl lysine isopeptide (Gly-Lys) (interchain with K-? in acceptor proteins) cross-link involves residue glycine 99.

This sequence belongs to the URM1 family. C-terminal thiocarboxylation occurs in 2 steps, it is first acyl-adenylated (-COAMP) via the hesA/moeB/thiF part of the MOCS3 homolog, then thiocarboxylated (-COSH) via the rhodanese domain of the MOCS3 homolog.

It localises to the cytoplasm. It participates in tRNA modification; 5-methoxycarbonylmethyl-2-thiouridine-tRNA biosynthesis. Its function is as follows. Acts as a sulfur carrier required for 2-thiolation of mcm(5)S(2)U at tRNA wobble positions of cytosolic tRNA(Lys), tRNA(Glu) and tRNA(Gln). Serves as sulfur donor in tRNA 2-thiolation reaction by being thiocarboxylated (-COSH) at its C-terminus by MOCS3. The sulfur is then transferred to tRNA to form 2-thiolation of mcm(5)S(2)U. Also acts as a ubiquitin-like protein (UBL) that is covalently conjugated via an isopeptide bond to lysine residues of target proteins. The thiocarboxylated form serves as substrate for conjugation and oxidative stress specifically induces the formation of UBL-protein conjugates. The chain is Ubiquitin-related modifier 1 homolog 2 from Arabidopsis thaliana (Mouse-ear cress).